The chain runs to 55 residues: Large ribosomal subunit protein bL33 (55 aa).

It belongs to the bacterial ribosomal protein bL33 family.

In Bartonella henselae (strain ATCC 49882 / DSM 28221 / CCUG 30454 / Houston 1) (Rochalimaea henselae), this protein is Large ribosomal subunit protein bL33.